The sequence spans 176 residues: Cathelicidin-2 (176 aa).

A signal peptide spans 1 to 29; it reads METQGASLSLGRWSLWLLLLGLVVPLASA. Position 30 is a pyrrolidone carboxylic acid (Q30). The propeptide occupies 30–130; it reads QALSYREAVL…DINCNELQSV (101 aa). Intrachain disulfides connect C85–C96 and C107–C124. Positions 135-176 are disordered; the sequence is PIRRPPIRPPFNPPFRPPVRPPFRPPFRPPFRPPIGPFPGRR. Residues 141–176 are compositionally biased toward pro residues; sequence IRPPFNPPFRPPVRPPFRPPFRPPFRPPIGPFPGRR. P173 is modified (proline amide). The propeptide at 174 to 176 is removed in mature form; it reads GRR.

It belongs to the cathelicidin family. In terms of processing, elastase is responsible for its maturation.

Its subcellular location is the secreted. Binds to the lipid A moiety of bacterial lipopolysaccharides (LPS), a glycolipid present in the outer membrane of all Gram-negative bacteria. Shows a potent antimicrobial activity against the Gram-negative bacteria E.coli, S.typhimurium and P.aeruginosa. Less active against the Gram-positive bacteria S.aureus, L.monocytogenes and B.subtilis. The chain is Cathelicidin-2 (CATHL2) from Capra hircus (Goat).